The chain runs to 319 residues: Olfactory receptor 5B21 (319 aa).

The Extracellular segment spans residues 1 to 26 (MTSMENITEVTEFILLGLTDDPNLQV). N-linked (GlcNAc...) asparagine glycosylation is present at asparagine 6. The helical transmembrane segment at 27-47 (PLLLIFLFIYLVTLIGNGGMM) threads the bilayer. Over 48–55 (VIIFSDSH) the chain is Cytoplasmic. A helical membrane pass occupies residues 56 to 76 (LHTPMYFFLSNLSFVDLGYSS). At 77–100 (AVAPKMVAALQSGNKVISYNGCAA) the chain is on the extracellular side. A disulfide bridge links cysteine 98 with cysteine 190. A helical membrane pass occupies residues 101 to 121 (QFFFFVGFATVECYLLASMAY). The Cytoplasmic segment spans residues 122–134 (DRHAAVCRPLHYT). Residues 135-155 (TTMTTGVCTILTIGSYTCGFL) traverse the membrane as a helical segment. At 156-197 (NASIHAADTFKLSFCGSNKINHFFCDIPPLLALACSSTHISK) the chain is on the extracellular side. The helical transmembrane segment at 198–218 (LVVFFVVGFNVFFTLLVIIIS) threads the bilayer. At 219–238 (YFFIYIAIQNMKSSEGRKKA) the chain is on the cytoplasmic side. Residues 239 to 259 (FSTCASHLTAVSIFYGTIIFM) form a helical membrane-spanning segment. The Extracellular portion of the chain corresponds to 260–272 (YLQPSSGQSMDTD). The chain crosses the membrane as a helical span at residues 273 to 293 (KIASVFYTVVIPMLNPLIYSL). The Cytoplasmic segment spans residues 294-319 (RNREVKSALWKILNRFYPASFSVSRK).

This sequence belongs to the G-protein coupled receptor 1 family.

It is found in the cell membrane. Odorant receptor. This chain is Olfactory receptor 5B21, found in Mus musculus (Mouse).